The chain runs to 459 residues: uncharacterized protein (459 aa).

This sequence belongs to the Rab GDI family.

The protein resides in the cytoplasm. The protein localises to the nucleus. This is an uncharacterized protein from Schizosaccharomyces pombe (strain 972 / ATCC 24843) (Fission yeast).